Consider the following 321-residue polypeptide: Cytochrome c biogenesis protein CcsA (321 aa).

Transmembrane regions (helical) follow at residues 17–37 (IISI…IVGI), 43–63 (KGII…WIYS), 143–163 (MLLS…FLVI), 225–245 (VISL…VWAN), 258–275 (ETWA…LHTR), and 287–307 (IVAS…NLLG).

This sequence belongs to the CcmF/CycK/Ccl1/NrfE/CcsA family. In terms of assembly, may interact with Ccs1.

The protein resides in the plastid. Its subcellular location is the chloroplast thylakoid membrane. In terms of biological role, required during biogenesis of c-type cytochromes (cytochrome c6 and cytochrome f) at the step of heme attachment. This Drimys granadensis protein is Cytochrome c biogenesis protein CcsA.